We begin with the raw amino-acid sequence, 320 residues long: Melanocyte-stimulating hormone receptor (320 aa).

Topologically, residues 1-40 (MPVLGPERRLLASLSSAPPAAPRLGLAANQTNQTGPQCLE) are extracellular. Asparagine 32 is a glycosylation site (N-linked (GlcNAc...) asparagine). Residues 41–66 (VSIPDGLFLSLGLVSLVENVLVVAAI) traverse the membrane as a helical segment. Over 67–75 (AKNRNLHSP) the chain is Cytoplasmic. A helical transmembrane segment spans residues 76–96 (MYYFVCCLAVSDLLVSVSNVL). Topologically, residues 97 to 121 (ETAVLLLLEAGALAAQAAVVQQLDN) are extracellular. A helical transmembrane segment spans residues 122–143 (VMDVLICGSMVSSLCFLGAIAV). Residues 144–166 (DRYVSIFYALRYHSIVTLPRAGR) are Cytoplasmic-facing. The chain crosses the membrane as a helical span at residues 167-186 (AIAAIWAGSVLSSTLFIAYY). Over 187-194 (HHTAVLLG) the chain is Extracellular. Residues 195-214 (LVSFFVAMLALMAVLYVHML) form a helical membrane-spanning segment. Residues 215 to 243 (ARACQHGRHIARLHKTQHPTRQGCGLKGA) are Cytoplasmic-facing. The chain crosses the membrane as a helical span at residues 244-269 (ATLTILLGVFLLCWAPFFLHLSLVVL). Residues 270-282 (CPQHPTCGCVFKN) lie on the Extracellular side of the membrane. The helical transmembrane segment at 283 to 303 (VNLFLALVICNSIVDPLIYAF) threads the bilayer. At 304-320 (RSQELRKTLQEVLQCSW) the chain is on the cytoplasmic side.

The protein belongs to the G-protein coupled receptor 1 family. In terms of assembly, interacts with MGRN1, but does not undergo MGRN1-mediated ubiquitination; this interaction competes with GNAS-binding and thus inhibits agonist-induced cAMP production. Interacts with OPN3; the interaction results in a decrease in MC1R-mediated cAMP signaling and ultimately a decrease in melanin production in melanocytes.

The protein resides in the cell membrane. Functionally, receptor for MSH (alpha, beta and gamma) and ACTH. The activity of this receptor is mediated by G proteins which activate adenylate cyclase. Mediates melanogenesis, the production of eumelanin (black/brown) and phaeomelanin (red/yellow), via regulation of cAMP signaling in melanocytes. This Sus scrofa (Pig) protein is Melanocyte-stimulating hormone receptor (MC1R).